Reading from the N-terminus, the 102-residue chain is Large ribosomal subunit protein bL21 (102 aa).

It belongs to the bacterial ribosomal protein bL21 family. As to quaternary structure, part of the 50S ribosomal subunit. Contacts protein L20.

Its function is as follows. This protein binds to 23S rRNA in the presence of protein L20. The protein is Large ribosomal subunit protein bL21 of Ehrlichia ruminantium (strain Welgevonden).